The sequence spans 1183 residues: Polyphosphatidylinositol phosphatase INP52 (1183 aa).

The segment covering 133-153 has biased composition (low complexity); it reads PPSISTHSSRSSLRSSSSRSL. A disordered region spans residues 133-161; it reads PPSISTHSSRSSLRSSSSRSLNAQEQAPK. A Phosphoserine modification is found at S152. Positions 167–507 constitute an SAC domain; sequence LRKLLSNGSF…GDQISQIYTG (341 aa). S522 is subject to Phosphoserine. Low complexity predominate over residues 955 to 968; it reads SPLLSGPSPQPSVV. The tract at residues 955 to 1183 is disordered; that stretch reads SPLLSGPSPQ…VHPLKPCDPN (229 aa). Phosphoserine occurs at positions 1005 and 1016. T1032 carries the post-translational modification Phosphothreonine. 3 stretches are compositionally biased toward polar residues: residues 1046-1057, 1082-1100, and 1130-1145; these read KPVSLQKSSSEL, STAP…VSTT, and KLNT…SPSN. S1095 carries the post-translational modification Phosphoserine.

This sequence belongs to the synaptojanin family. It in the central section; belongs to the inositol 1,4,5-trisphosphate 5-phosphatase family. As to quaternary structure, interacts (via SAC domain) with BSP1; the interaction is direct. Interacts with ABP1.

The protein localises to the cytoplasm. The protein resides in the cytoskeleton. Its subcellular location is the actin patch. It catalyses the reaction a 1,2-diacyl-sn-glycero-3-phospho-(1D-myo-inositol-4,5-bisphosphate) + H2O = a 1,2-diacyl-sn-glycero-3-phospho-(1D-myo-inositol 4-phosphate) + phosphate. Its function is as follows. Dephosphorylates a number of phosphatidylinositols (PIs) like phosphatidylinositol 4,5-bisphosphate (PtdIns(4,5)P2), but also phosphatidylinositol 3-phosphate (PtdIns(3)P), phosphatidylinositol 4-phosphate (PtdIns(4)P), and phosphatidylinositol 3,5-bisphosphate (PtdIns(3,5)P2). Controls the cellular levels and subcellular distribution of phosphatidylinositol 3-phosphate and phosphatidylinositol 4,5-bisphosphate. Specifically functions within the early endocytic pathway and actin organization. The sequence is that of Polyphosphatidylinositol phosphatase INP52 from Saccharomyces cerevisiae (strain ATCC 204508 / S288c) (Baker's yeast).